A 464-amino-acid polypeptide reads, in one-letter code: Phospho-2-dehydro-3-deoxyheptonate aldolase AroG (464 aa).

Cys-87 contacts Mn(2+). Residues Arg-126, 285–286, Lys-308, and Arg-339 contribute to the phosphoenolpyruvate site; that span reads ER. The Mn(2+) site is built by His-371, Glu-413, and Asp-443.

It belongs to the class-II DAHP synthase family. Homodimer. Probably interacts with MSMEG_5536. Mn(2+) is required as a cofactor. The cofactor is Co(2+). Requires Cd(2+) as cofactor.

It catalyses the reaction D-erythrose 4-phosphate + phosphoenolpyruvate + H2O = 7-phospho-2-dehydro-3-deoxy-D-arabino-heptonate + phosphate. Its pathway is metabolic intermediate biosynthesis; chorismate biosynthesis; chorismate from D-erythrose 4-phosphate and phosphoenolpyruvate: step 1/7. In terms of biological role, catalyzes an aldol-like condensation reaction between phosphoenolpyruvate (PEP) and D-erythrose 4-phosphate (E4P) to generate 3-deoxy-D-arabino-heptulosonate 7-phosphate (DAH7P) and inorganic phosphate. In Mycolicibacterium smegmatis (strain ATCC 700084 / mc(2)155) (Mycobacterium smegmatis), this protein is Phospho-2-dehydro-3-deoxyheptonate aldolase AroG (aroG).